We begin with the raw amino-acid sequence, 23 residues long: Superoxide dismutase [Mn], mitochondrial (23 aa).

This sequence belongs to the iron/manganese superoxide dismutase family. Homotetramer. The cofactor is Mn(2+).

It is found in the mitochondrion matrix. It catalyses the reaction 2 superoxide + 2 H(+) = H2O2 + O2. Functionally, destroys superoxide anion radicals which are normally produced within the cells and which are toxic to biological systems. This chain is Superoxide dismutase [Mn], mitochondrial, found in Aquarana catesbeiana (American bullfrog).